Here is a 261-residue protein sequence, read N- to C-terminus: Acidic leucine-rich nuclear phosphoprotein 32 family member B (261 aa).

LRR repeat units follow at residues 16–40 (PAAV…LTAE), 43–64 (NLEF…PKLP), 65–87 (KLKK…AEKL), and 89–110 (NLTH…EPLK). At Lys86 the chain carries N6-acetyllysine. The region spanning 123–161 (CEVTNLNDYRESVFKLLPQLTYLDGYDREDREAPDSDAE) is the LRRCT domain. The tract at residues 149–261 (DREDREAPDS…RETDDEGEDD (113 aa)) is disordered. Residues 157 to 243 (DSDAEVDGVD…DEDEDEEEEE (87 aa)) show a composition bias toward acidic residues. A Phosphoserine modification is found at Ser158. Residues 244 to 254 (SGKGEGRKRET) show a composition bias toward basic and acidic residues. Residue Thr254 is modified to Phosphothreonine.

It belongs to the ANP32 family. As to quaternary structure, monomer. Interacts with histones H3 and H4. Some glutamate residues are glycylated by TTLL8. This modification occurs exclusively on glutamate residues and results in a glycine chain on the gamma-carboxyl group.

Its subcellular location is the nucleus. In terms of biological role, multifunctional protein working as a cell cycle progression factor as well as a cell survival factor. Required for the progression from the G1 to the S phase. Anti-apoptotic protein which functions as a caspase-3 inhibitor. Has no phosphatase 2A (PP2A) inhibitor activity. Exhibits histone chaperone properties, stimulating core histones to assemble into a nucleosome. This Ovis aries (Sheep) protein is Acidic leucine-rich nuclear phosphoprotein 32 family member B (ANP32B).